The primary structure comprises 458 residues: Exodeoxyribonuclease 7 large subunit (458 aa).

The protein belongs to the XseA family. In terms of assembly, heterooligomer composed of large and small subunits.

It is found in the cytoplasm. The enzyme catalyses Exonucleolytic cleavage in either 5'- to 3'- or 3'- to 5'-direction to yield nucleoside 5'-phosphates.. In terms of biological role, bidirectionally degrades single-stranded DNA into large acid-insoluble oligonucleotides, which are then degraded further into small acid-soluble oligonucleotides. This chain is Exodeoxyribonuclease 7 large subunit, found in Escherichia coli O6:H1 (strain CFT073 / ATCC 700928 / UPEC).